Consider the following 1043-residue polypeptide: MELQKGKGAAAAAAASGAAGGGGGGAGAGAPGGGRLLLSTSLDAKDELEERLERCMSIVTSMTAGVSEREANDALNAYVCKGLPQHEEICLGLFTLILTEPAQAQKCYRDLALVSRDGMNIVLNKINQILMEKYLKLQDTCRTQLVWLVRELVKSGVLGADGVCMTFMKQIAGGGDVTAKNIWLAESVLDILTEQREWVLKSSILIAMAVYTYLRLIVDHHGTAQLQALRQKEVDFCISLLRERFMECLMIGRDLVRLLQNVARIPEFELLWKDIIHNPQALSPQFTGILQLLQSRTSRKFLACRLTPDMETKLLFMTSRVRFGQQKRYQDWFQRQYLSTPDSQSLRCDLIRYICGVVHPSNEVLSSDILPRWAIIGWLLTTCTSNVAASNAKLALFYDWLFFSPDKDSIMNIEPAILVMHHSMKPHPAITATLLDFMCRIIPNFYPPLEGHVRQGVFSSLNHIVEKRVLAHLAPLFDNPKLDKELRAMLREKFPEFCSSPSPPVEVKIEEPVSMEMDNHMSDKDESCYDNAEAAFSDDEEDLNSKGKKREFRFHPIKETVVEEPVDITPYLDQLDESLRDKVLQLQKGSDTEAQCEVMQEIVDQVLEEDFDSEQLSVLASCLQELFKAHFRGEVLPEEITEESLEESVGKPLYLIFRNLCQMQEDNSSFSLLLDLLSELYQKQPKIGYHLLYYLRASKAAAGKMNLYESFAQATQLGDLHTCLMMDMKACQEDDVRLLCHLTPSIYTEFPDETLRSGELLNMIVAVIDSAQLQELVCHVMMGNLVMFRKDSVLNILIQSLDWETFEQYCAWQLFLAHNIPLETIIPILQHLKYKEHPEALSCLLLQLRREKPSEEMVKMVLSRPCHPDDQFTTSILRHWCMKHDELLAEHIKSLLIKNNSLPRKRQSLRSSSSKLAQLTLEQILEHLDNLRLNLTNTKQNFFSQTPILQALQHVQASCDEAHKMKFSDLFSLAEEYEDSSTKPPKSRRKAALSSPRSRKNATQPPNAEEESGSSSASEEEDTKPKPTKRKRKGSSAVGSDSD.

At Met1 the chain carries N-acetylmethionine. 3 positions are modified to phosphoserine: Ser502, Ser537, and Ser995. The segment at 977–1043 is disordered; that stretch reads YEDSSTKPPK…GSSAVGSDSD (67 aa). Acidic residues predominate over residues 1008–1022; that stretch reads AEEESGSSSASEEED.

Belongs to the Integrator subunit 3 family. As to quaternary structure, component of the Integrator complex, composed of core subunits INTS1, INTS2, INTS3, INTS4, INTS5, INTS6, INTS7, INTS8, INTS9/RC74, INTS10, INTS11/CPSF3L, INTS12, INTS13, INTS14 and INTS15. The core complex associates with protein phosphatase 2A subunits PPP2CA and PPP2R1A, to form the Integrator-PP2A (INTAC) complex. Component of the SOSS complex, composed of SOSS-B (SOSS-B1/NABP2 or SOSS-B2/NABP1), SOSS-A/INTS3 and SOSS-C/INIP. SOSS complexes containing SOSS-B1/NABP2 are more abundant than complexes containing SOSS-B2/NABP1. Interacts with SOSS-B1/NABP2, SOSS-B2/NABP1 and SOSS-C/INIP; the interaction is direct. Interacts with NBN/NBS1.

It localises to the nucleus. The protein resides in the cytoplasm. In terms of biological role, component of the integrator complex, a multiprotein complex that terminates RNA polymerase II (Pol II) transcription in the promoter-proximal region of genes. The integrator complex provides a quality checkpoint during transcription elongation by driving premature transcription termination of transcripts that are unfavorably configured for transcriptional elongation: the complex terminates transcription by (1) catalyzing dephosphorylation of the C-terminal domain (CTD) of Pol II subunit POLR2A/RPB1 and SUPT5H/SPT5, (2) degrading the exiting nascent RNA transcript via endonuclease activity and (3) promoting the release of Pol II from bound DNA. The integrator complex is also involved in terminating the synthesis of non-coding Pol II transcripts, such as enhancer RNAs (eRNAs), small nuclear RNAs (snRNAs), telomerase RNAs and long non-coding RNAs (lncRNAs). Within the integrator complex, INTS3 is involved in the post-termination step: INTS3 binds INTS7 in the open conformation of integrator complex and prevents the rebinding of Pol II to the integrator after termination cycle. Mediates recruitment of cytoplasmic dynein to the nuclear envelope, probably as component of the integrator complex. Its function is as follows. Component of the SOSS complex, a multiprotein complex that functions downstream of the MRN complex to promote DNA repair and G2/M checkpoint. The SOSS complex associates with single-stranded DNA at DNA lesions and influences diverse endpoints in the cellular DNA damage response including cell-cycle checkpoint activation, recombinational repair and maintenance of genomic stability. The SOSS complex is required for efficient homologous recombination-dependent repair of double-strand breaks (DSBs) and ATM-dependent signaling pathways. In the SOSS complex, it is required for the assembly of the complex and for stabilization of the complex at DNA damage sites. The protein is Integrator complex subunit 3 of Homo sapiens (Human).